A 46-amino-acid polypeptide reads, in one-letter code: Sperm protamine P1 (46 aa).

The protein belongs to the protamine P1 family. As to expression, testis.

The protein localises to the nucleus. It is found in the chromosome. Its function is as follows. Protamines substitute for histones in the chromatin of sperm during the haploid phase of spermatogenesis. They compact sperm DNA into a highly condensed, stable and inactive complex. This Glauconycteris beatrix (Beatrix's bat) protein is Sperm protamine P1 (PRM1).